Reading from the N-terminus, the 100-residue chain is Cystatin-B (100 aa).

One can recognise a Cystatin domain in the interval 6 to 88 (GGISAPLDAD…GGGLELSGMQ (83 aa)). The Secondary area of contact signature appears at 48–52 (QIVSG).

This sequence belongs to the cystatin family. In terms of tissue distribution, widely expressed. Highly expressed in liver and to a lesser extent in spleen, gill, brain, intestine, kidney, head kidney and blood. Lowest level in muscle.

The protein localises to the cytoplasm. Thiol protease inhibitor. Has papain inhibitory activity in vitro. May be involved in immune responses against invading Gram-negative bacteria. The polypeptide is Cystatin-B (Oplegnathus fasciatus (Barred knifejaw)).